The sequence spans 239 residues: Octanoyltransferase (239 aa).

Residues 48–236 (EGGDELVWLV…AFETVFGETT (189 aa)) enclose the BPL/LPL catalytic domain. Substrate-binding positions include 87-94 (RGGEYTYH), 167-169 (ALG), and 180-182 (GLS). The active-site Acyl-thioester intermediate is the cysteine 198.

This sequence belongs to the LipB family.

The protein localises to the cytoplasm. It catalyses the reaction octanoyl-[ACP] + L-lysyl-[protein] = N(6)-octanoyl-L-lysyl-[protein] + holo-[ACP] + H(+). It functions in the pathway protein modification; protein lipoylation via endogenous pathway; protein N(6)-(lipoyl)lysine from octanoyl-[acyl-carrier-protein]: step 1/2. Catalyzes the transfer of endogenously produced octanoic acid from octanoyl-acyl-carrier-protein onto the lipoyl domains of lipoate-dependent enzymes. Lipoyl-ACP can also act as a substrate although octanoyl-ACP is likely to be the physiological substrate. The polypeptide is Octanoyltransferase (Rhizobium etli (strain ATCC 51251 / DSM 11541 / JCM 21823 / NBRC 15573 / CFN 42)).